The primary structure comprises 371 residues: Dual-specificity RNA methyltransferase RlmN (371 aa).

The active-site Proton acceptor is the Glu99. A Radical SAM core domain is found at 106–333; the sequence is DDNRATLCIS…AIRRASKGQD (228 aa). A disulfide bond links Cys113 and Cys338. [4Fe-4S] cluster is bound by residues Cys120, Cys124, and Cys127. Residues 165–166, Ser197, 219–221, and Asn295 each bind S-adenosyl-L-methionine; these read GE and SLN. The active-site S-methylcysteine intermediate is Cys338. Positions 345–371 are disordered; the sequence is LTVSPPAQESERNSARPDRSQGKGKHL. A compositionally biased stretch (basic and acidic residues) spans 353–365; that stretch reads ESERNSARPDRSQ.

The protein belongs to the radical SAM superfamily. RlmN family. Requires [4Fe-4S] cluster as cofactor.

It localises to the cytoplasm. The enzyme catalyses adenosine(2503) in 23S rRNA + 2 reduced [2Fe-2S]-[ferredoxin] + 2 S-adenosyl-L-methionine = 2-methyladenosine(2503) in 23S rRNA + 5'-deoxyadenosine + L-methionine + 2 oxidized [2Fe-2S]-[ferredoxin] + S-adenosyl-L-homocysteine. The catalysed reaction is adenosine(37) in tRNA + 2 reduced [2Fe-2S]-[ferredoxin] + 2 S-adenosyl-L-methionine = 2-methyladenosine(37) in tRNA + 5'-deoxyadenosine + L-methionine + 2 oxidized [2Fe-2S]-[ferredoxin] + S-adenosyl-L-homocysteine. Specifically methylates position 2 of adenine 2503 in 23S rRNA and position 2 of adenine 37 in tRNAs. m2A2503 modification seems to play a crucial role in the proofreading step occurring at the peptidyl transferase center and thus would serve to optimize ribosomal fidelity. The protein is Dual-specificity RNA methyltransferase RlmN of Syntrophotalea carbinolica (strain DSM 2380 / NBRC 103641 / GraBd1) (Pelobacter carbinolicus).